Here is a 274-residue protein sequence, read N- to C-terminus: (R)-stereoselective amidase (274 aa).

The CN hydrolase domain occupies 1–234 (MKIELVQLAG…EVRHVVELDL (234 aa)). The active-site Proton acceptor is the Glu-40. Lys-108 functions as the Proton donor in the catalytic mechanism. Cys-140 serves as the catalytic Nucleophile.

In terms of assembly, monomer.

It catalyses the reaction (R)-piperazine-2-carboxamide + H2O = (R)-piperazine-2-carboxylate + NH4(+). It carries out the reaction beta-alaninamide + H2O = beta-alanine + NH4(+). Its activity is regulated as follows. Completely inhibited by p-chloromercuribenzoate, N-ethylmaleimide, MnSO(4), MnCl(2), CoCl(2), NiCl(2), CuSO(4), CuCl(2), ZnSO(4), ZnCl(2), AgNO(3), CdCl(2), HgCl(2) and PbCl(2). Partially inhibited by FeCl(3) and Fe(NH(4))(2)(SO(4))(2). Slightly enhanced by dithiothreitol. Unaffected by LiBr, H(2)BO(3), NaCl, MgSO(4), MgCl(2), AlCl(3), KCl, CaCl(2), CrCl(3), RbCl, Na(2)MoO(4), (NH(4))(6)Mo(7)O(24), CsCl and BaCl(2). Unaffected by the chelating agents o-phenanthroline, 8-hydroxyquinoline, enthylenediaminetetraacetic acid and alpha,alpha'-dipyridyl. Not inhibited by the carbonyl reagents hydroxylamine, phenylhydrazine, hydrazine, D,L-penicillamine and D-cycloserine. Not affected by the serine protease inhibitor phenylmethanesulfonyl fluoride, the serine/cysteine protease inhibitor leupeptine or the aspartic protease inhibitor pepstatin. Its function is as follows. Hydrolyzes (R)-piperazine-2-carboxamide and (R)-piperazine-2-tert-butylcarboxamide with strict R-stereoselectivity. Also active towards beta-alaninamide, piperidine-3-carboxmide, D-glutaminamide and slightly active towards L-glutaminamide and piperidine-4-carboxamide. The chain is (R)-stereoselective amidase from Pseudomonas sp.